The chain runs to 47 residues: Snake venom metalloproteinase jararafibrase-4 (47 aa).

The 42-residue stretch at 6 to 47 (RYIELFLVVDHGMFMKYNGNSDKIYYYIHQMVNIMKXAYXYL) folds into the Peptidase M12B domain. E9 lines the Ca(2+) pocket.

This sequence belongs to the venom metalloproteinase (M12B) family. In terms of assembly, monomer. The cofactor is Zn(2+). Expressed by the venom gland.

Its subcellular location is the secreted. Its activity is regulated as follows. Inhibited by 1,10-phenanthroline and EDTA. The metalloproteinase is a probable venom zinc protease that induces local hemorrhage in the skin of rats. Degrades type-IV collagen, gelatin, laminin and fibronectin. Has fibrinolytic activities. Has high hemagglutinating activity on red blood cells. Cleaves insulin B chain at 29-His-|-Leu-30, and 38-Ala-|-Leu-39 bonds. This is Snake venom metalloproteinase jararafibrase-4 from Bothrops jararaca (Jararaca).